Reading from the N-terminus, the 338-residue chain is UDP-glucose 4-epimerase (338 aa).

NAD(+) is bound by residues 11–12 (FI), 31–36 (DNLCNS), 58–59 (DI), 80–84 (FAGLK), N99, S124, Y149, K153, and F178. Substrate contacts are provided by S124 and Y149. The Proton acceptor role is filled by Y149. Residues N179, 199-200 (NL), 216-218 (SVF), R231, and 292-295 (RAGD) contribute to the substrate site.

The protein belongs to the NAD(P)-dependent epimerase/dehydratase family. In terms of assembly, homodimer. It depends on NAD(+) as a cofactor.

The catalysed reaction is UDP-alpha-D-glucose = UDP-alpha-D-galactose. The protein operates within carbohydrate metabolism; galactose metabolism. Functionally, involved in the metabolism of galactose. Plays an essential role in the incorporation of galactose into meningococcal lipopolysaccharide surface molecules, which are important for pathogenesis. Catalyzes the conversion of UDP-galactose (UDP-Gal) to UDP-glucose (UDP-Glc) through a mechanism involving the transient reduction of NAD. This is UDP-glucose 4-epimerase (galE) from Neisseria gonorrhoeae.